Reading from the N-terminus, the 131-residue chain is Small ribosomal subunit protein uS8 (131 aa).

The protein belongs to the universal ribosomal protein uS8 family. As to quaternary structure, part of the 30S ribosomal subunit. Contacts proteins S5 and S12.

One of the primary rRNA binding proteins, it binds directly to 16S rRNA central domain where it helps coordinate assembly of the platform of the 30S subunit. The protein is Small ribosomal subunit protein uS8 of Albidiferax ferrireducens (strain ATCC BAA-621 / DSM 15236 / T118) (Rhodoferax ferrireducens).